The following is a 358-amino-acid chain: MTTTLRRGETGSLWDRFCDWITSTNNRIYVGWFGVLMIPTLLAATICFVIAFIAAPPVDIDGIREPVSGSLLYGNNIITGAVVPTSNAIGLHFYPIWEALDEWLYNGGPYELIVFHFLIGIFCWLGRQWELSYRLGMRPWICVAYSAPVAAATSVFLIYPIGQGSFSDGMPLGITGTFNFMLVFQAEHNILMHPFHQLGVAGVFGGSLFCAMHGSLVTSSLVRETTETESQNYGYKFGQEQETYSIVAAHGYFGRLIWQYASFNNSRSLHFFLAAWPVVCIWFTALGISTMAFNLNGFNFNQSILDSQGRVVNTWADILNRANLGMEVMHERNAHNFPLDLAAGEVLPIALQSPAING.

The next 3 membrane-spanning stretches (helical) occupy residues 29–46 (YVGW…AATI), 116–131 (HFLI…QWEL), and 140–154 (WICV…AATS). Residue H116 participates in chlorophyll a binding. Residue W124 participates in pheophytin a binding. Residues D168 and E187 each contribute to the [CaMn4O5] cluster site. Residues 195 to 216 (FHQLGVAGVFGGSLFCAMHGSL) traverse the membrane as a helical segment. Residue H196 coordinates chlorophyll a. A quinone is bound by residues H213 and 262–263 (SF). H213 contributes to the Fe cation binding site. H270 serves as a coordination point for Fe cation. A helical transmembrane segment spans residues 272–286 (FLAAWPVVCIWFTAL). [CaMn4O5] cluster contacts are provided by H330, E331, D340, and A342. The propeptide occupies 343 to 358 (AGEVLPIALQSPAING).

This sequence belongs to the reaction center PufL/M/PsbA/D family. PSII is composed of 1 copy each of membrane proteins PsbA, PsbB, PsbC, PsbD, PsbE, PsbF, PsbH, PsbI, PsbJ, PsbK, PsbL, PsbM, PsbT, PsbX, PsbY, PsbZ, Psb30/Ycf12, peripheral proteins PsbO, CyanoQ (PsbQ), PsbU, PsbV and a large number of cofactors. It forms dimeric complexes. The D1/D2 heterodimer binds P680, chlorophylls that are the primary electron donor of PSII, and subsequent electron acceptors. It shares a non-heme iron and each subunit binds pheophytin, quinone, additional chlorophylls, carotenoids and lipids. D1 provides most of the ligands for the Mn4-Ca-O5 cluster of the oxygen-evolving complex (OEC). There is also a Cl(-1) ion associated with D1 and D2, which is required for oxygen evolution. The PSII complex binds additional chlorophylls, carotenoids and specific lipids. serves as cofactor. Tyr-159 forms a radical intermediate that is referred to as redox-active TyrZ, YZ or Y-Z. Post-translationally, C-terminally processed by CtpA; processing is essential to allow assembly of the oxygen-evolving complex and thus photosynthetic growth.

The protein localises to the cellular thylakoid membrane. The enzyme catalyses 2 a plastoquinone + 4 hnu + 2 H2O = 2 a plastoquinol + O2. Its function is as follows. Photosystem II (PSII) is a light-driven water:plastoquinone oxidoreductase that uses light energy to abstract electrons from H(2)O, generating O(2) and a proton gradient subsequently used for ATP formation. It consists of a core antenna complex that captures photons, and an electron transfer chain that converts photonic excitation into a charge separation. The D1/D2 (PsbA/PsbD) reaction center heterodimer binds P680, the primary electron donor of PSII as well as several subsequent electron acceptors. The polypeptide is Photosystem II protein D1 (Mastigocladus laminosus (Fischerella sp.)).